We begin with the raw amino-acid sequence, 598 residues long: UvrABC system protein C (598 aa).

The 81-residue stretch at 11-91 (QKPGVYIMHN…IKKYRPHYNI (81 aa)) folds into the GIY-YIG domain. The UVR domain maps to 195–230 (KTTIKKLKKDMNRYAKNMEFEKAAMLRDQIDTIKIT).

This sequence belongs to the UvrC family. In terms of assembly, interacts with UvrB in an incision complex.

Its subcellular location is the cytoplasm. Functionally, the UvrABC repair system catalyzes the recognition and processing of DNA lesions. UvrC both incises the 5' and 3' sides of the lesion. The N-terminal half is responsible for the 3' incision and the C-terminal half is responsible for the 5' incision. In Methanosphaera stadtmanae (strain ATCC 43021 / DSM 3091 / JCM 11832 / MCB-3), this protein is UvrABC system protein C.